A 115-amino-acid chain; its full sequence is Large ribosomal subunit protein bL19 (115 aa).

It belongs to the bacterial ribosomal protein bL19 family.

Functionally, this protein is located at the 30S-50S ribosomal subunit interface and may play a role in the structure and function of the aminoacyl-tRNA binding site. The sequence is that of Large ribosomal subunit protein bL19 from Pectobacterium carotovorum subsp. carotovorum (strain PC1).